Consider the following 168-residue polypeptide: Scytalone dehydratase arp1 (168 aa).

Positions 29 and 49 each coordinate substrate. Catalysis depends on residues His84 and His109. Asn130 lines the substrate pocket.

The protein belongs to the scytalone dehydratase family. In terms of assembly, homotrimer. Each subunit contains an active site, located in the central part of the hydrophobic core of the monomer, which functions independently.

Its subcellular location is the endosome. The enzyme catalyses scytalone = 1,3,8-trihydroxynaphthalene + H2O. The protein operates within pigment biosynthesis; melanin biosynthesis. With respect to regulation, fenoxanil inhibits arp1 scytalone dehydratase activity. Functionally, scytalone dehydratase; part of the gene cluster that mediates the biosynthesis of dihydroxynaphthalene (DHN)-melanin, a bluish-green pigment and a structural component of the conidial wall. The first step of the pathway is the production of the heptaketide naphtopyrone YWA1 by the polyketide synthase alb1 though condensation of acetyl-CoA with malonyl-CoA. The naphtopyrone YWA1 is then converted to the pentaketide 1,3,6,8-tetrahydroxynaphthalene (1,3,6,8-THN) by the heptaketide hydrolyase ayg1 though chain-length shortening. 1,3,6,8-THN is substrate of the hydroxynaphthalene reductase arp2 to yield scytalone. The scytalone dehydratase arp1 then reduces scytalone to 1,3,8-THN. 1,3,8-THN is also substrate of the hydroxynaphthalene reductase arp2 to yield vermelone. Vermelone is further converted by the multicopper oxidase abr1 to 1,8-DHN. Finally the laccase abr2 transforms 1,8-DHN to DHN-melanin. DHN-melanin biosynthesis appears to be initiated in endosomes where early enzymes (abl1, ayg1, arp1 and arp2) localize, with exocytosis leading to melanin deposition on the cell surface where late enzymes (abr1 and abr2) localize. DHN-melanin is an important structural component of the outer cell wall and is required for the presence of conidial surface hydrophobins. DHN-melanin also plays a crucial role in fungal virulence, including a protective role against the host's immune defenses. DHN-melanin also protects conidia against amoeba predation. This chain is Scytalone dehydratase arp1, found in Aspergillus fumigatus (strain ATCC MYA-4609 / CBS 101355 / FGSC A1100 / Af293) (Neosartorya fumigata).